The sequence spans 98 residues: Putative defensin-like protein 239 (98 aa).

An N-terminal signal peptide occupies residues methionine 1–glycine 23. Cystine bridges form between cysteine 29–cysteine 89, cysteine 39–cysteine 69, cysteine 47–cysteine 86, and cysteine 67–cysteine 88.

This sequence belongs to the DEFL family.

The protein localises to the secreted. The protein is Putative defensin-like protein 239 (SCRL17) of Arabidopsis thaliana (Mouse-ear cress).